Reading from the N-terminus, the 1409-residue chain is MAP kinase-activating death domain protein (1409 aa).

The uDENN domain maps to 26–230; that stretch reads RGASQSSPDA…VPVPGKTKVQ (205 aa). One can recognise a cDENN domain in the interval 251 to 390; the sequence is RFTLIDFPLH…DATHLKERLK (140 aa). Residues 392-496 form the dDENN domain; the sequence is AINKMTTMTV…ECCLCPKNET (105 aa). Disordered stretches follow at residues 654 to 701, 761 to 784, 902 to 1008, and 1015 to 1034; these read SFDH…MKGL, QHIV…QSKN, SSSA…KVKT, and PQNL…SFLA. Polar residues-rich tracts occupy residues 680-691 and 761-772; these read SDASDTPTSRGS and QHIVRSKTQPNP. Low complexity-rich tracts occupy residues 773-784 and 902-913; these read TSQQTANQQSKN and SSSAPSTMTTPS. The segment covering 915 to 925 has biased composition (basic and acidic residues); it reads HSNDILKESRP. Residues 941-961 show a composition bias toward polar residues; it reads LGQNVTPTSTNNHEIAQSTRS. Residues 963–1003 are compositionally biased toward pro residues; the sequence is ALPPPVPPREAPPIPKRNPPPLGAPPKVPEGARAPPPLPPR. Low complexity predominate over residues 1020–1031; sequence PNNQPAQPSSPS. The Death domain occupies 1109 to 1184; the sequence is GMDQEPSEMI…GLVCSKEINK (76 aa).

Belongs to the MADD family. As to quaternary structure, interacts with cab-1. As to expression, expressed in nearly all neurons.

It localises to the cell membrane. It is found in the cytoplasm. In terms of biological role, guanyl-nucleotide exchange factor that regulates small GTPases. Converts GDP-bound inactive form of rab-3 and cab-1 to the GTP-bound active forms. Regulator of presynaptic activity that interacts with rab-3 to regulate synaptic vesicle release. Is also a regulator of the cab-1 synaptic transmission pathway. Probably by converting rab-3 to its GTP-bound active form, plays a role in the recruitment of endophilin unc-57 to synaptic vesicles. Probably by activating rab-3 and thus regulating the trafficking of dense-core vesicles, plays a role in AVG neuron-mediated formation of the right axon tract of the ventral nerve cord. Regulates anterior body muscle contractions (aBOC) and the expulsion steps during the defecation motor program (DMP). Probably by regulating DMP, required for fatty acid uptake by intestinal cells. The chain is MAP kinase-activating death domain protein (aex-3) from Caenorhabditis elegans.